A 138-amino-acid polypeptide reads, in one-letter code: Acidic phospholipase A2 MVL-PLA2 (138 aa).

Positions 1–16 are cleaved as a signal peptide; sequence MRTLWIVAVCLMGVEG. Cystine bridges form between Cys42–Cys131, Cys44–Cys60, Cys59–Cys111, Cys65–Cys138, Cys66–Cys104, Cys73–Cys97, and Cys91–Cys102. Residues Tyr43, Gly45, and Gly47 each contribute to the Ca(2+) site. Residue His63 is part of the active site. Residue Asp64 participates in Ca(2+) binding. The May inhibit integrin function (Atypical cell attachment site) motif lies at 86 to 88; it reads NGD. Asp105 is an active-site residue.

This sequence belongs to the phospholipase A2 family. Group II subfamily. D49 sub-subfamily. Requires Ca(2+) as cofactor. As to expression, expressed by the venom gland.

It is found in the secreted. It catalyses the reaction a 1,2-diacyl-sn-glycero-3-phosphocholine + H2O = a 1-acyl-sn-glycero-3-phosphocholine + a fatty acid + H(+). In terms of biological role, snake venom phospholipase A2 (PLA2) that displays an inhibitory effect, independent from its catalytic activity, on tumor cell adhesion and migration. This effect is mediated via specific inhibition of integrins alpha-5/beta-1 (ITGA5/ITGB1), alpha-v/beta-3 (ITGAV/ITGB3) and alpha-v/beta-6 (ITGAV/ITGB6). PLA2 catalyzes the calcium-dependent hydrolysis of the 2-acyl groups in 3-sn-phosphoglycerides. This Macrovipera lebetina transmediterranea (Blunt-nosed viper) protein is Acidic phospholipase A2 MVL-PLA2.